We begin with the raw amino-acid sequence, 378 residues long: Acetylornithine deacetylase (378 aa).

His-76 is a binding site for Zn(2+). Asp-78 is an active-site residue. Asp-108 is a Zn(2+) binding site. The active site involves Glu-140. The Zn(2+) site is built by Glu-141, Glu-165, and His-351.

Belongs to the peptidase M20A family. ArgE subfamily. Homodimer. Requires Zn(2+) as cofactor. It depends on Co(2+) as a cofactor. Glutathione is required as a cofactor.

It is found in the cytoplasm. The catalysed reaction is N(2)-acetyl-L-ornithine + H2O = L-ornithine + acetate. The protein operates within amino-acid biosynthesis; L-arginine biosynthesis; L-ornithine from N(2)-acetyl-L-ornithine (linear): step 1/1. In terms of biological role, catalyzes the hydrolysis of the amide bond of N(2)-acetylated L-amino acids. Cleaves the acetyl group from N-acetyl-L-ornithine to form L-ornithine, an intermediate in L-arginine biosynthesis pathway, and a branchpoint in the synthesis of polyamines. This chain is Acetylornithine deacetylase, found in Vibrio atlanticus (strain LGP32) (Vibrio splendidus (strain Mel32)).